Reading from the N-terminus, the 116-residue chain is Non-specific lipid-transfer protein AP10 (116 aa).

An N-terminal signal peptide occupies residues 1–26; that stretch reads MKGTSMGVAILAMIVMAQLMVHPSVA. 4 disulfide bridges follow: Cys29/Cys76, Cys39/Cys53, Cys54/Cys98, and Cys74/Cys112.

Belongs to the plant LTP family. In germinating seeds, detected in the entire surface of the cotyledons, shoot meristem, inter-cotyledon space, primary xylem and immature vascular elements (at protein level). Expressed in seeds, but not the aerial parts of the plant.

The protein resides in the secreted. Its subcellular location is the extracellular space. It localises to the membrane. Functionally, plant non-specific lipid-transfer proteins transfer phospholipids as well as galactolipids across membranes. May play a role in wax or cutin deposition in the cell walls of expanding epidermal cells and certain secretory tissues. Permeabilizes the membrane of fungal spores, inhibits germination of the spores of the fungus F.solani at a concentration of 40 ug/ml. Inhibits the growth of F.solani with an IC(50) of 6.5 ug/ml, weakly inhibits the growth of the fungus A.alternata. Binds oleoyl-CoA. The chain is Non-specific lipid-transfer protein AP10 from Helianthus annuus (Common sunflower).